The following is a 377-amino-acid chain: Succinyl-diaminopimelate desuccinylase (377 aa).

His-66 contributes to the Zn(2+) binding site. Asp-68 is an active-site residue. A Zn(2+)-binding site is contributed by Asp-99. The Proton acceptor role is filled by Glu-133. Residues Glu-134, Glu-162, and His-348 each coordinate Zn(2+).

The protein belongs to the peptidase M20A family. DapE subfamily. In terms of assembly, homodimer. The cofactor is Zn(2+). Requires Co(2+) as cofactor.

It carries out the reaction N-succinyl-(2S,6S)-2,6-diaminopimelate + H2O = (2S,6S)-2,6-diaminopimelate + succinate. It functions in the pathway amino-acid biosynthesis; L-lysine biosynthesis via DAP pathway; LL-2,6-diaminopimelate from (S)-tetrahydrodipicolinate (succinylase route): step 3/3. In terms of biological role, catalyzes the hydrolysis of N-succinyl-L,L-diaminopimelic acid (SDAP), forming succinate and LL-2,6-diaminopimelate (DAP), an intermediate involved in the bacterial biosynthesis of lysine and meso-diaminopimelic acid, an essential component of bacterial cell walls. This is Succinyl-diaminopimelate desuccinylase from Bordetella avium (strain 197N).